The chain runs to 283 residues: MKFFNLNALAAVVTGVLLAAGPTQAKDYKSITIATEGSYAPYNFKDAGGKLIGFDIDLGNDLCKRMNIECKFVEQAWDGIIPSLTAGRYDAIMAAMGIQPAREKVIAFSRPYLLTPMTFLTTADSPLLKTQVAIENLPLDNITPEQKAELDKFTKIFEGVKFGVQAGTSHEAFMKQMMPSVQISTYDTIDNVVMDLKAGRIDASLASVSFLKPLTDKPDNKDLKMFGPRMTGGLFGKGVGVGIRKEDADLKALFDKAIDAAIADGTVQKLSQQWFGYDASPKQ.

The N-terminal stretch at 1–25 (MKFFNLNALAAVVTGVLLAAGPTQA) is a signal peptide. Cys63 and Cys70 are disulfide-bonded.

Belongs to the bacterial solute-binding protein 3 family.

The protein resides in the periplasm. Its function is as follows. Component of the nopaline active transport system probably consisting of four subunits: Q, M, P and T. This system is also capable of transporting octopine provided that catabolic functions are induced with nopaline. This chain is Nopaline-binding periplasmic protein (nocT), found in Agrobacterium fabrum (strain C58 / ATCC 33970) (Agrobacterium tumefaciens (strain C58)).